The chain runs to 876 residues: AP-5 complex subunit beta-1 (876 aa).

As to quaternary structure, probably part of the adaptor protein complex 5 (AP-5), a tetramer composed of AP5B1, AP5M1, AP5S1 and AP5Z1. Interacts with ZFYVE26 and SPG11.

As part of AP-5, a probable fifth adaptor protein complex, it may be involved in endosomal transport. The sequence is that of AP-5 complex subunit beta-1 (Ap5b1) from Rattus norvegicus (Rat).